Here is a 127-residue protein sequence, read N- to C-terminus: Aspartate 1-decarboxylase (127 aa).

Catalysis depends on Ser-25, which acts as the Schiff-base intermediate with substrate; via pyruvic acid. Ser-25 carries the post-translational modification Pyruvic acid (Ser). Residue Thr-57 coordinates substrate. The active-site Proton donor is the Tyr-58. Residue 73–75 participates in substrate binding; that stretch reads GAA.

This sequence belongs to the PanD family. Heterooctamer of four alpha and four beta subunits. Pyruvate is required as a cofactor. In terms of processing, is synthesized initially as an inactive proenzyme, which is activated by self-cleavage at a specific serine bond to produce a beta-subunit with a hydroxyl group at its C-terminus and an alpha-subunit with a pyruvoyl group at its N-terminus.

It is found in the cytoplasm. The catalysed reaction is L-aspartate + H(+) = beta-alanine + CO2. It functions in the pathway cofactor biosynthesis; (R)-pantothenate biosynthesis; beta-alanine from L-aspartate: step 1/1. In terms of biological role, catalyzes the pyruvoyl-dependent decarboxylation of aspartate to produce beta-alanine. The protein is Aspartate 1-decarboxylase of Staphylococcus aureus (strain JH1).